A 376-amino-acid chain; its full sequence is Cobalt-precorrin-5B C(1)-methyltransferase (376 aa).

This sequence belongs to the CbiD family.

It catalyses the reaction Co-precorrin-5B + S-adenosyl-L-methionine = Co-precorrin-6A + S-adenosyl-L-homocysteine. It functions in the pathway cofactor biosynthesis; adenosylcobalamin biosynthesis; cob(II)yrinate a,c-diamide from sirohydrochlorin (anaerobic route): step 6/10. Functionally, catalyzes the methylation of C-1 in cobalt-precorrin-5B to form cobalt-precorrin-6A. In Bradyrhizobium sp. (strain BTAi1 / ATCC BAA-1182), this protein is Cobalt-precorrin-5B C(1)-methyltransferase.